The following is a 385-amino-acid chain: Putative type I restriction enzyme specificity subunit S.HindORF215P (385 aa).

It belongs to the type-I restriction system S methylase family.

Its function is as follows. A putative specificity subunit for a type I restriction enzyme; the corresponding endonuclease and methylase subunits have multiple frameshifts and are probably not expressed. The chain is Putative type I restriction enzyme specificity subunit S.HindORF215P from Haemophilus influenzae (strain ATCC 51907 / DSM 11121 / KW20 / Rd).